Reading from the N-terminus, the 635-residue chain is Sodium- and chloride-dependent creatine transporter 1 (635 aa).

The span at 1–11 (MANKSTENGIY) shows a compositional bias: polar residues. A disordered region spans residues 1 to 27 (MANKSTENGIYSVSGEEKKGPLIAPGP). Residues 1–60 (MANKSTENGIYSVSGEEKKGPLIAPGPDGAPAKGDGPAALGAPGSLLAVPPRETWTRQMD) are Cytoplasmic-facing. A helical transmembrane segment spans residues 61–81 (FIMSCVGFAVGLGNVWRFPYL). At 82 to 87 (CYKNGG) the chain is on the extracellular side. Residues 88-108 (GVFLIPYILIALIGGIPIFFL) form a helical membrane-spanning segment. Residues 109–138 (EISLGQFMKAGSINVWNICPLFKGLGYASM) lie on the Cytoplasmic side of the membrane. A helical membrane pass occupies residues 139–159 (VIVFYCNTYYIMVLAWGFYYL). Topologically, residues 160 to 230 (VKSFTTTLPW…LSEGLEVPGA (71 aa)) are extracellular. N-linked (GlcNAc...) asparagine glycosylation is found at N192 and N197. The helical transmembrane segment at 231–251 (LNWEVTLCLLTCWVLVYFCVW) threads the bilayer. Topologically, residues 252 to 269 (KGVKSTGKIVYFTATFPY) are cytoplasmic. A helical transmembrane segment spans residues 270–290 (VVLVVLLVRGVLLPGALDGII). Topologically, residues 291-304 (YYLKPDWSKLASPQ) are extracellular. A helical transmembrane segment spans residues 305–325 (VWIDAGTQIFFSYAIGLGALT). The Cytoplasmic segment spans residues 326 to 341 (ALGSYNRFNNNCYKDA). The helical transmembrane segment at 342-362 (IILALINSGTSFFAGFVVFSI) threads the bilayer. Over 363-394 (LGFMATEQGVHISKVAESGPGLAFIAYPRAVT) the chain is Extracellular. A helical transmembrane segment spans residues 395–415 (LMPVAPLWAALFFFMLLLLGL). Topologically, residues 416–444 (DSQFVGVEGFITGLLDLLPASYYFRFQRE) are cytoplasmic. A helical membrane pass occupies residues 445–465 (ISVALCCTICFVIDLSMVTDG). Residues 466–479 (GMYVFQLFDYYSAS) are Extracellular-facing. The helical transmembrane segment at 480–500 (GTTLLWQAFWECVVVAWVYGA) threads the bilayer. At 501–520 (DRFMDDVACMIGYRPCPWMK) the chain is on the cytoplasmic side. Residues 521–541 (WCWSFFTPLVCMGIFIFNVVY) form a helical membrane-spanning segment. Over 542-560 (HEPLVYNNTYVYPWWGEAV) the chain is Extracellular. N548 carries an N-linked (GlcNAc...) asparagine glycan. The chain crosses the membrane as a helical span at residues 561-581 (GWAFALSSMLCVPLHLLGCLL). Residues 582–635 (RAKGTMAERWQHLTQPIWGLHHLEYRAQDSDVRGLTTLTPVSESSKVVVVESVM) lie on the Cytoplasmic side of the membrane. T617 and T620 each carry phosphothreonine. Position 623 is a phosphoserine (S623).

It belongs to the sodium:neurotransmitter symporter (SNF) (TC 2.A.22) family. SLC6A8 subfamily. In terms of processing, glycosylated.

Its subcellular location is the cell membrane. The protein localises to the apical cell membrane. The catalysed reaction is creatine(out) + chloride(out) + 2 Na(+)(out) = creatine(in) + chloride(in) + 2 Na(+)(in). Functionally, creatine:sodium symporter which mediates the uptake of creatine. Plays an important role in supplying creatine to the brain via the blood-brain barrier. The sequence is that of Sodium- and chloride-dependent creatine transporter 1 (SLC6A8) from Bos taurus (Bovine).